We begin with the raw amino-acid sequence, 298 residues long: FH protein interacting protein FIP2 (298 aa).

Positions 9-80 (SMVRLNIGGK…LRDGVIPSLS (72 aa)) constitute a BTB domain. Pentapeptide repeat domains are found at residues 129–165 (ERVR…FFSR), 166–203 (TNLQ…GALL), 216–255 (ACLV…NLKG), and 256–295 (AKLS…NMTG).

In terms of assembly, interacts with FH1. In terms of tissue distribution, expressed in all tissues but preferentially in roots and flowers.

It participates in protein modification; protein ubiquitination. Functionally, may act as a substrate-specific adapter of an E3 ubiquitin-protein ligase complex (CUL3-RBX1-BTB) which mediates the ubiquitination and subsequent proteasomal degradation of target proteins. This is FH protein interacting protein FIP2 (FIP2) from Arabidopsis thaliana (Mouse-ear cress).